The following is a 292-amino-acid chain: Altered inheritance of mitochondria protein 36, mitochondrial (292 aa).

A mitochondrion-targeting transit peptide spans 1–26 (MFARLVPRLQPQLLSKRVLTARYPML). A helical transmembrane segment spans residues 56 to 75 (VIRYLFYMLVASWVAIYFVA).

The protein belongs to the AIM36 family.

The protein localises to the mitochondrion membrane. This is Altered inheritance of mitochondria protein 36, mitochondrial (AIM36) from Candida albicans (strain SC5314 / ATCC MYA-2876) (Yeast).